The sequence spans 232 residues: Large ribosomal subunit protein uL1 (232 aa).

The protein belongs to the universal ribosomal protein uL1 family. In terms of assembly, part of the 50S ribosomal subunit.

Its function is as follows. Binds directly to 23S rRNA. The L1 stalk is quite mobile in the ribosome, and is involved in E site tRNA release. In terms of biological role, protein L1 is also a translational repressor protein, it controls the translation of the L11 operon by binding to its mRNA. The polypeptide is Large ribosomal subunit protein uL1 (Chlamydia caviae (strain ATCC VR-813 / DSM 19441 / 03DC25 / GPIC) (Chlamydophila caviae)).